The chain runs to 244 residues: uncharacterized protein (244 aa).

An N-terminal signal peptide occupies residues Met1 to Gly17.

As to expression, component of the acid-soluble and acid-insoluble organic matrix of prismatic shell layers (at protein level).

It localises to the secreted. This is an uncharacterized protein from Haliotis asinina (Donkey's ear abalone).